Consider the following 116-residue polypeptide: Non-specific lipid-transfer protein D, cotyledon-specific isoform (116 aa).

The N-terminal stretch at 1–24 is a signal peptide; that stretch reads MKNIFFSVFFLLSFLLCLANVSEA. 4 cysteine pairs are disulfide-bonded: C28-C76, C38-C53, C54-C98, and C74-C112.

Belongs to the plant LTP family.

Plant non-specific lipid-transfer proteins transfer phospholipids as well as galactolipids across membranes. May play a role in wax or cutin deposition in the cell walls of expanding epidermal cells and certain secretory tissues. The polypeptide is Non-specific lipid-transfer protein D, cotyledon-specific isoform (Ricinus communis (Castor bean)).